A 428-amino-acid chain; its full sequence is MKVQRPKGTVDILPAESGSWEKVETIARNFFKRANYREIRTPSFENYEVFSRSSGESSDVVEKEMYDFNDKGGRHIALRPEGTAGVVRAYVENKLYGPDVVKPFNVYYIDNTFRYERPQAGRQREFHQIGVESFGSNSPLADVETIMMGHDLLAELGVKNYELHINTLGNAQVRKDYHDALVNYFTPLKDQLSEDSQRRLSMNPLRILDSKAEEDKQFLPDAPRIVDYLDEDSKKNFETITDMLEQLGINYVLDDDLVRGLDYYTGVIFEFMVEDKNLWESATTILGGGRYNHLVEEFDGPETPAVGFGIGEERLMLVLKEQNPALFEDEGIDFFITNIGEGTEMKAVEIARSLRKQDFKAQYDVDQKKLKQQFRKADRVHAKFVITLGAKELENGVLNIKRLADGKTLDLSLEDLNDMKSVMEKIED.

It belongs to the class-II aminoacyl-tRNA synthetase family. Homodimer.

It is found in the cytoplasm. The enzyme catalyses tRNA(His) + L-histidine + ATP = L-histidyl-tRNA(His) + AMP + diphosphate + H(+). This is Histidine--tRNA ligase from Lactobacillus gasseri (strain ATCC 33323 / DSM 20243 / BCRC 14619 / CIP 102991 / JCM 1131 / KCTC 3163 / NCIMB 11718 / NCTC 13722 / AM63).